A 28-amino-acid chain; its full sequence is Phospholipase A2 2 (28 aa).

It belongs to the phospholipase A2 family. Group I subfamily. It depends on Ca(2+) as a cofactor. As to expression, expressed by the venom gland.

The protein resides in the secreted. It catalyses the reaction a 1,2-diacyl-sn-glycero-3-phosphocholine + H2O = a 1-acyl-sn-glycero-3-phosphocholine + a fatty acid + H(+). Functionally, snake venom phospholipase A2 (PLA2) that inhibits neuromuscular transmission by blocking acetylcholine release from the nerve termini. PLA2 catalyzes the calcium-dependent hydrolysis of the 2-acyl groups in 3-sn-phosphoglycerides. This is Phospholipase A2 2 from Micrurus nigrocinctus (Central American coral snake).